The primary structure comprises 347 residues: 5-deoxyribose 1-phosphate isomerase (347 aa).

Residues R48–A50, R91, and Q198 each bind substrate. D239 functions as the Proton donor in the catalytic mechanism. N249–K250 lines the substrate pocket.

The protein belongs to the EIF-2B alpha/beta/delta subunits family. DrdI subfamily.

The catalysed reaction is 5-deoxy-alpha-D-ribose 1-phosphate = 5-deoxy-D-ribulose 1-phosphate. Its pathway is carbohydrate degradation. Functionally, catalyzes the isomerization of 5-deoxy-alpha-D-ribose 1-phosphate to 5-deoxy-D-ribulose 1-phosphate, as part of a 5-deoxyribose salvage pathway that recycles this toxic radical SAM enzyme by-product to mainstream metabolites. The polypeptide is 5-deoxyribose 1-phosphate isomerase (Petrotoga mobilis (strain DSM 10674 / SJ95)).